The sequence spans 302 residues: Probable alpha-L-glutamate ligase (302 aa).

In terms of domain architecture, ATP-grasp spans 104 to 287 (LQLLSRKGLG…IAGQIIEYIE (184 aa)). ATP contacts are provided by residues Lys-141, 178–179 (EY), Asp-187, and 211–213 (RSN). 3 residues coordinate Mg(2+): Asp-248, Glu-260, and Asn-262. Mn(2+) is bound by residues Asp-248, Glu-260, and Asn-262.

It belongs to the RimK family. The cofactor is Mg(2+). Mn(2+) serves as cofactor.

This chain is Probable alpha-L-glutamate ligase, found in Chromohalobacter salexigens (strain ATCC BAA-138 / DSM 3043 / CIP 106854 / NCIMB 13768 / 1H11).